A 429-amino-acid polypeptide reads, in one-letter code: Probable E3 ubiquitin-protein ligase makorin-1 (429 aa).

C3H1-type zinc fingers lie at residues 18–45, 48–75, and 153–180; these read WTKH…HDLT, KPAA…HCKP, and ELRK…HGDV. The makorin-type Cys-His stretch occupies residues 181-208; that stretch reads CDMCGLQVLHPTDSSQRSEHTKACIEAH. An RING-type zinc finger spans residues 226-280; sequence CGVCMEVVFEKANPSERRFGILSNCSHCYCLKCIRKWRSAKQFESKIIKSCPECR. The segment at 309 to 338 adopts a C3H1-type 4 zinc-finger fold; that stretch reads GMGRKPCRYFDEGRGICPFGANCFYKHAFP. The interval 343 to 362 is disordered; sequence EEAQPQRRQTGSSSRNRNSR. Over residues 348–358 the composition is skewed to low complexity; it reads QRRQTGSSSRN.

It catalyses the reaction S-ubiquitinyl-[E2 ubiquitin-conjugating enzyme]-L-cysteine + [acceptor protein]-L-lysine = [E2 ubiquitin-conjugating enzyme]-L-cysteine + N(6)-ubiquitinyl-[acceptor protein]-L-lysine.. Its pathway is protein modification; protein ubiquitination. In terms of biological role, E3 ubiquitin ligase catalyzing the covalent attachment of ubiquitin moieties onto substrate proteins. The sequence is that of Probable E3 ubiquitin-protein ligase makorin-1 from Takifugu rubripes (Japanese pufferfish).